We begin with the raw amino-acid sequence, 283 residues long: NFU1 iron-sulfur cluster scaffold homolog, mitochondrial (283 aa).

A mitochondrion-targeting transit peptide spans 1–30 (MSKFLSQAALNTLRNTRLGSRQLVRSFAGI). Residues 182–250 (IKELLDTRIR…IPEVESVEQV (69 aa)) are nifU. [4Fe-4S] cluster contacts are provided by Cys-219 and Cys-222.

The protein belongs to the NifU family.

The protein localises to the mitochondrion. In terms of biological role, molecular scaffold for [Fe-S] cluster assembly of mitochondrial iron-sulfur proteins. The protein is NFU1 iron-sulfur cluster scaffold homolog, mitochondrial of Drosophila yakuba (Fruit fly).